The sequence spans 197 residues: Probable inosine/xanthosine triphosphatase (197 aa).

Residue Thr9–Lys14 participates in substrate binding. Mg(2+) is bound by residues Asp36 and Asp65.

Belongs to the YjjX NTPase family. In terms of assembly, homodimer. It depends on Mg(2+) as a cofactor. Mn(2+) serves as cofactor.

The enzyme catalyses XTP + H2O = XDP + phosphate + H(+). It carries out the reaction ITP + H2O = IDP + phosphate + H(+). Phosphatase that hydrolyzes non-canonical purine nucleotides such as XTP and ITP to their respective diphosphate derivatives. Probably excludes non-canonical purines from DNA/RNA precursor pool, thus preventing their incorporation into DNA/RNA and avoiding chromosomal lesions. This chain is Probable inosine/xanthosine triphosphatase, found in Aeropyrum pernix (strain ATCC 700893 / DSM 11879 / JCM 9820 / NBRC 100138 / K1).